Here is a 257-residue protein sequence, read N- to C-terminus: MKDPKAPIGVFDSGVGGLTVLKALRRLLPREEFLYFGDTARVPYGGKPLAMVRRFAWEIAGFLLRQGVKAIVVACNTASSAALPDLAEDLSVPVFGVVEPAARAARGFRKVGLIGTQATVESGAYPRYVDLAWAKACPLFVPLVEEGLWDDPVALLVARHYLEDAPKDLEALILGCTHYPFLKGAIGAVLPGVALLDSAELTAQEVARALEAEGLLNPEGRGRTFHLVTGDPEAYRALAERLGERVEAVRRVSLEEL.

Substrate contacts are provided by residues 12 to 13 and 44 to 45; these read DS and YG. Residue cysteine 75 is the Proton donor/acceptor of the active site. Substrate is bound at residue 76–77; sequence NT. The active-site Proton donor/acceptor is cysteine 176. 177 to 178 provides a ligand contact to substrate; the sequence is TH.

It belongs to the aspartate/glutamate racemases family.

It carries out the reaction L-glutamate = D-glutamate. It participates in cell wall biogenesis; peptidoglycan biosynthesis. In terms of biological role, provides the (R)-glutamate required for cell wall biosynthesis. The chain is Glutamate racemase from Thermus thermophilus (strain ATCC 27634 / DSM 579 / HB8).